The following is a 145-amino-acid chain: Leghemoglobin (145 aa).

Positions 3–145 (GFTEKQEALV…ELAAALKKAF (143 aa)) constitute a Globin domain. Y26 and Y31 each carry nitrated tyrosine. O2 is bound at residue H62. The heme b site is built by K65, H93, and K96. At Y134 the chain carries Nitrated tyrosine.

The protein belongs to the plant globin family. As to quaternary structure, monomer. In terms of processing, nitrated in effective nodules and particularly in hypoxic conditions; this mechanism may play a protective role in the symbiosis by buffering toxic peroxynitrite NO(2)(-). Nitration level decrease during nodule senescence. In terms of tissue distribution, root nodules.

It is found in the cytoplasm. The protein localises to the cytosol. Its subcellular location is the nucleus. In terms of biological role, leghemoglobin that reversibly binds oxygen O(2) through a pentacoordinated heme iron. In root nodules, facilitates the diffusion of oxygen to the bacteroids while preventing the bacterial nitrogenase from being inactivated by buffering dioxygen, nitric oxide and carbon monoxide, and promoting the formation of reactive oxygen species (ROS, e.g. H(2)O(2)). This role is essential for symbiotic nitrogen fixation (SNF). In Psophocarpus tetragonolobus (Winged bean), this protein is Leghemoglobin.